Consider the following 493-residue polypeptide: Probable cytosol aminopeptidase (493 aa).

Mn(2+) is bound by residues Lys257 and Asp262. The active site involves Lys269. Mn(2+)-binding residues include Asp281, Asp341, and Glu343. The active site involves Arg345.

The protein belongs to the peptidase M17 family. Requires Mn(2+) as cofactor.

It localises to the cytoplasm. It catalyses the reaction Release of an N-terminal amino acid, Xaa-|-Yaa-, in which Xaa is preferably Leu, but may be other amino acids including Pro although not Arg or Lys, and Yaa may be Pro. Amino acid amides and methyl esters are also readily hydrolyzed, but rates on arylamides are exceedingly low.. It carries out the reaction Release of an N-terminal amino acid, preferentially leucine, but not glutamic or aspartic acids.. Presumably involved in the processing and regular turnover of intracellular proteins. Catalyzes the removal of unsubstituted N-terminal amino acids from various peptides. The polypeptide is Probable cytosol aminopeptidase (Prochlorococcus marinus (strain MIT 9211)).